Here is a 435-residue protein sequence, read N- to C-terminus: Elongation factor 1-alpha (435 aa).

Residues 4–229 form the tr-type G domain; that stretch reads KPHLNLIVIG…DQLEIPPKPV (226 aa). Positions 13-20 are G1; sequence GHVDHGKS. Residue 13-20 coordinates GTP; that stretch reads GHVDHGKS. Ser20 contributes to the Mg(2+) binding site. The G2 stretch occupies residues 69 to 73; that stretch reads GVTIN. The tract at residues 90–93 is G3; the sequence is DAPG. GTP-binding positions include 90 to 94 and 152 to 155; these read DAPGH and NKMD. Positions 152–155 are G4; sequence NKMD. Positions 193–195 are G5; that stretch reads VAP.

This sequence belongs to the TRAFAC class translation factor GTPase superfamily. Classic translation factor GTPase family. EF-Tu/EF-1A subfamily.

It is found in the cytoplasm. The catalysed reaction is GTP + H2O = GDP + phosphate + H(+). In terms of biological role, GTP hydrolase that promotes the GTP-dependent binding of aminoacyl-tRNA to the A-site of ribosomes during protein biosynthesis. The sequence is that of Elongation factor 1-alpha from Sulfolobus acidocaldarius (strain ATCC 33909 / DSM 639 / JCM 8929 / NBRC 15157 / NCIMB 11770).